Here is a 130-residue protein sequence, read N- to C-terminus: Small ribosomal subunit protein uS9 (130 aa).

It belongs to the universal ribosomal protein uS9 family.

In Serratia proteamaculans (strain 568), this protein is Small ribosomal subunit protein uS9.